Here is a 94-residue protein sequence, read N- to C-terminus: Large ribosomal subunit protein uL23 (94 aa).

Belongs to the universal ribosomal protein uL23 family. Part of the 50S ribosomal subunit. Contacts protein L29, and trigger factor when it is bound to the ribosome.

In terms of biological role, one of the early assembly proteins it binds 23S rRNA. One of the proteins that surrounds the polypeptide exit tunnel on the outside of the ribosome. Forms the main docking site for trigger factor binding to the ribosome. The polypeptide is Large ribosomal subunit protein uL23 (Dehalococcoides mccartyi (strain ATCC BAA-2100 / JCM 16839 / KCTC 5957 / BAV1)).